The following is a 404-amino-acid chain: XK-related protein 8 (404 aa).

Transmembrane regions (helical) follow at residues 14-34 (FVFSVIGACTFLVDWGSDVWL), 44-64 (VTWFWVLVGLMALSSFVVQTF), 169-189 (AVQFVSIAASTTSIAWMVVDY), 209-229 (LIYFLWNLLLIAPRVAALALC), 232-252 (VLSGYMAAHFLMLWSAFALWA), 262-282 (SVAGEWLYRATVGLIWYFSWF), 293-313 (SAIYHSFISTDGAILLATWWC), and 324-344 (ALALLIALPLFHFLGLLFKAL).

This sequence belongs to the XK family.

Its subcellular location is the cell membrane. The catalysed reaction is a 1,2-diacyl-sn-glycero-3-phospho-L-serine(in) = a 1,2-diacyl-sn-glycero-3-phospho-L-serine(out). In terms of biological role, phospholipid scramblase that promotes phosphatidylserine exposure on apoptotic cell surface, possibly by mediating phospholipid scrambling. Phosphatidylserine is a specific marker only present at the surface of apoptotic cells and acts as a specific signal for engulfment. This chain is XK-related protein 8, found in Gasterosteus aculeatus (Three-spined stickleback).